Here is a 194-residue protein sequence, read N- to C-terminus: Naphthalene 1,2-dioxygenase system, small oxygenase component (194 aa).

Belongs to the bacterial ring-hydroxylating dioxygenase beta subunit family. In terms of assembly, the naphthalene dioxygenase (NDO) multicomponent enzyme system is composed of an electron transfer component and a dioxygenase component (iron sulfur protein (ISP)). The electron transfer component is composed of a ferredoxin reductase (NagAa) and a ferredoxin (NagAb), and the dioxygenase component is formed by a large alpha subunit (NagAc) and a small beta subunit (NagAd).

It functions in the pathway aromatic compound metabolism; naphthalene degradation. Its function is as follows. Component of the naphthalene dioxygenase (NDO) multicomponent enzyme system which catalyzes the incorporation of both atoms of molecular oxygen into naphthalene to form cis-(1R,2S)-dihydroxy-1,2-dihydronaphthalene. Also able to use styrene as substrate. The beta subunit seems to have a structural role in the holoenzyme. The sequence is that of Naphthalene 1,2-dioxygenase system, small oxygenase component from Ralstonia sp.